The primary structure comprises 364 residues: Aminomethyltransferase (364 aa).

This sequence belongs to the GcvT family. The glycine cleavage system is composed of four proteins: P, T, L and H.

It carries out the reaction N(6)-[(R)-S(8)-aminomethyldihydrolipoyl]-L-lysyl-[protein] + (6S)-5,6,7,8-tetrahydrofolate = N(6)-[(R)-dihydrolipoyl]-L-lysyl-[protein] + (6R)-5,10-methylene-5,6,7,8-tetrahydrofolate + NH4(+). In terms of biological role, the glycine cleavage system catalyzes the degradation of glycine. The protein is Aminomethyltransferase of Enterobacter sp. (strain 638).